Reading from the N-terminus, the 88-residue chain is Mitochondrial import inner membrane translocase subunit TIM9 (88 aa).

Positions 35-59 (CFDDCVNDFTSNNLTTKETGCITKC) match the Twin CX3C motif motif. 2 cysteine pairs are disulfide-bonded: cysteine 35–cysteine 59 and cysteine 39–cysteine 55.

This sequence belongs to the small Tim family. Heterohexamer; composed of 3 copies of TIM9 and 3 copies of TIM10, named soluble 70 kDa complex. Associates with the TIM22 complex, whose core is composed of TIM22 and TIM54. Interacts with the transmembrane regions of multi-pass transmembrane proteins in transit.

Its subcellular location is the mitochondrion inner membrane. Mitochondrial intermembrane chaperone that participates in the import and insertion of multi-pass transmembrane proteins into the mitochondrial inner membrane. Also required for the transfer of beta-barrel precursors from the TOM complex to the sorting and assembly machinery (SAM complex) of the outer membrane. Acts as a chaperone-like protein that protects the hydrophobic precursors from aggregation and guide them through the mitochondrial intermembrane space. The sequence is that of Mitochondrial import inner membrane translocase subunit TIM9 (TIM9) from Debaryomyces hansenii (strain ATCC 36239 / CBS 767 / BCRC 21394 / JCM 1990 / NBRC 0083 / IGC 2968) (Yeast).